Here is a 593-residue protein sequence, read N- to C-terminus: Lipolysis-stimulated lipoprotein receptor (593 aa).

An N-terminal signal peptide occupies residues 1 to 35; the sequence is MAPAAGACAGAPDSHPATVVFVCLFLIIFCPDPAS. Residues 36–206 lie on the Extracellular side of the membrane; the sequence is AIQVTVSDPY…PGFRAGPLED (171 aa). The region spanning 89–181 is the Ig-like V-type domain; that stretch reads PASVDNQLNA…DLDGNNEAYA (93 aa). C113 and C165 are joined by a disulfide. Residues 207-227 form a helical membrane-spanning segment; sequence WLFVVVVCLASLLLFLLLGIC. The Cytoplasmic segment spans residues 228–593; it reads WCQCCPHTCC…LALSRESLVV (366 aa). T283 carries the phosphothreonine modification. 5 positions are modified to phosphoserine: S308, S314, S332, S375, and S379. Over residues 375–387 the composition is skewed to basic and acidic residues; the sequence is SEVTSLHEDDWRS. Residues 375-578 form a disordered region; the sequence is SEVTSLHEDD…ETDSQASRER (204 aa). The residue at position 396 (T396) is a Phosphothreonine. Residues S407, S410, and S436 each carry the phosphoserine modification. The span at 435–444 shows a compositional bias: basic and acidic residues; that stretch reads RSVDALDDIN. Over residues 445–460 the composition is skewed to low complexity; sequence RPGSTESGRSSPPSSG. A phosphoserine mark is found at S471 and S473. Residues 472 to 550 show a composition bias toward basic and acidic residues; the sequence is RSRDDLYDPD…GSGERRRVYR (79 aa). Y478 carries the post-translational modification Phosphotyrosine. S575 is subject to Phosphoserine. K582 participates in a covalent cross-link: Glycyl lysine isopeptide (Lys-Gly) (interchain with G-Cter in ubiquitin). 2 positions are modified to phosphoserine: S587 and S590.

Belongs to the immunoglobulin superfamily. LISCH7 family. As to quaternary structure, homotrimer or homotetramer constituted of isoform 1 and/or isoform 2 and isoform 3. Assembles into cell-cell contacts. Interacts (via the cytoplasmic domain) with MARVELD2 (via C-terminal cytoplasmic domain); the interaction is required to recruit MARVELD2 to tricellular contacts. Interacts with OCLN. Phosphorylation at Ser-308 by MAPK8/JNK1 and MAPK9/JNK2 may be required for exclusive localization at tricellular tight junstions. Post-translationally, polyubiquitinated at Lys-582 via 'Lys-63'-linked ubiquitin chains; deubiquitinated by USP53. Specifically expressed in liver. Also detected in kidney and lung.

It is found in the cell membrane. Its subcellular location is the cell junction. The protein resides in the tight junction. Probable role in the clearance of triglyceride-rich lipoprotein from blood. Binds chylomicrons, LDL and VLDL in presence of free fatty acids and allows their subsequent uptake in the cells. Maintains epithelial barrier function by recruiting MARVELD2/tricellulin to tricellular tight junctions. This chain is Lipolysis-stimulated lipoprotein receptor, found in Rattus norvegicus (Rat).